A 303-amino-acid polypeptide reads, in one-letter code: Dihydroorotate dehydrogenase B (NAD(+)), catalytic subunit (303 aa).

FMN contacts are provided by residues S21 and 45–46; that span reads KG. Substrate contacts are provided by residues K45 and 69 to 73; that span reads NAVGL. N99 and N127 together coordinate FMN. N127 contacts substrate. C130 acts as the Nucleophile in catalysis. K165 and I191 together coordinate FMN. 192–193 is a binding site for substrate; sequence NT. FMN-binding positions include G217, 243 to 244, and 265 to 266; these read GG and GT.

The protein belongs to the dihydroorotate dehydrogenase family. Type 1 subfamily. In terms of assembly, heterotetramer of 2 PyrK and 2 PyrD type B subunits. FMN serves as cofactor.

Its subcellular location is the cytoplasm. The enzyme catalyses (S)-dihydroorotate + NAD(+) = orotate + NADH + H(+). Its pathway is pyrimidine metabolism; UMP biosynthesis via de novo pathway; orotate from (S)-dihydroorotate (NAD(+) route): step 1/1. Its function is as follows. Catalyzes the conversion of dihydroorotate to orotate with NAD(+) as electron acceptor. This chain is Dihydroorotate dehydrogenase B (NAD(+)), catalytic subunit (pyrD), found in Phocaeicola vulgatus (strain ATCC 8482 / DSM 1447 / JCM 5826 / CCUG 4940 / NBRC 14291 / NCTC 11154) (Bacteroides vulgatus).